We begin with the raw amino-acid sequence, 569 residues long: 2-succinyl-5-enolpyruvyl-6-hydroxy-3-cyclohexene-1-carboxylate synthase (569 aa).

This sequence belongs to the TPP enzyme family. MenD subfamily. In terms of assembly, homodimer. It depends on Mg(2+) as a cofactor. Requires Mn(2+) as cofactor. The cofactor is thiamine diphosphate.

It carries out the reaction isochorismate + 2-oxoglutarate + H(+) = 5-enolpyruvoyl-6-hydroxy-2-succinyl-cyclohex-3-ene-1-carboxylate + CO2. Its pathway is quinol/quinone metabolism; 1,4-dihydroxy-2-naphthoate biosynthesis; 1,4-dihydroxy-2-naphthoate from chorismate: step 2/7. The protein operates within quinol/quinone metabolism; menaquinone biosynthesis. In terms of biological role, catalyzes the thiamine diphosphate-dependent decarboxylation of 2-oxoglutarate and the subsequent addition of the resulting succinic semialdehyde-thiamine pyrophosphate anion to isochorismate to yield 2-succinyl-5-enolpyruvyl-6-hydroxy-3-cyclohexene-1-carboxylate (SEPHCHC). The protein is 2-succinyl-5-enolpyruvyl-6-hydroxy-3-cyclohexene-1-carboxylate synthase of Shewanella sediminis (strain HAW-EB3).